The primary structure comprises 375 residues: Alpha-2,8-sialyltransferase 8B (375 aa).

Residues 1 to 6 (MQLQFR) are Cytoplasmic-facing. The helical; Signal-anchor for type II membrane protein transmembrane segment at 7-23 (SWMLAALTLLVVFLIFA) threads the bilayer. The Lumenal segment spans residues 24-375 (DISEIEEEIG…LTVGQCDGAT (352 aa)). Asn60, Asn72, Asn89, and Asn134 each carry an N-linked (GlcNAc...) asparagine glycan. 2 disulfides stabilise this stretch: Cys157-Cys307 and Cys171-Cys371. CMP-N-acetyl-beta-neuraminate is bound by residues Asn162 and Asn185. N-linked (GlcNAc...) asparagine glycosylation is found at Asn219 and Asn234. Residues Thr294, Thr295, Gly296, Trp316, Tyr329, and His330 each contribute to the CMP-N-acetyl-beta-neuraminate site. His346 acts as the Proton donor/acceptor in catalysis.

It belongs to the glycosyltransferase 29 family. In terms of processing, autopolysialylated. Autopolysialylation is not a prerequisite for the polysialylation acitity, but enhances the polysialylation acitity.

Its subcellular location is the golgi apparatus membrane. The protein localises to the secreted. The protein resides in the cell membrane. It carries out the reaction [N-acetyl-alpha-D-neuraminosyl-(2-&gt;8)](n) + CMP-N-acetyl-beta-neuraminate = [N-acetyl-alpha-D-neuraminosyl-(2-&gt;8)](n+1) + CMP + H(+). It functions in the pathway protein modification; protein glycosylation. Functionally, catalyzes the transfer of a sialic acid from a CMP-linked sialic acid donor onto a terminal alpha-2,3-, alpha-2,6-, or alpha-2,8-linked sialic acid of an N-linked glycan acceptor through alpha-2,8-linkages. Therefore, participates in polysialic acid synthesis on various sialylated N-acetyllactosaminyl oligosaccharides (alpha-2,3-, alpha-2,6-, or alpha-2,8-linked sialic acid), including NCAM1, NCAM1 N-glycans, FETUB N-glycans, and to a lesser extent sialylparagloboside (SPG) and AHSG, which does not require the initial addition of an alpha 2,8-sialic acid. However, does not exhibit sialic acid-polymerase activity. Catalyzes polysialic acid synthesis in the hippocampal on NCAM1 and supports neurite outgrowth. ST8SIA2-mediated polysialylation influences on oligodendrocyte differentiation and may promote the integrity of myelin and axons. The polypeptide is Alpha-2,8-sialyltransferase 8B (Pan troglodytes (Chimpanzee)).